The following is a 358-amino-acid chain: UDP-N-acetylglucosamine--N-acetylmuramyl-(pentapeptide) pyrophosphoryl-undecaprenol N-acetylglucosamine transferase (358 aa).

UDP-N-acetyl-alpha-D-glucosamine contacts are provided by residues 10 to 12 (TGG), asparagine 124, serine 196, and glutamine 293.

The protein belongs to the glycosyltransferase 28 family. MurG subfamily.

Its subcellular location is the cell membrane. The enzyme catalyses di-trans,octa-cis-undecaprenyl diphospho-N-acetyl-alpha-D-muramoyl-L-alanyl-D-glutamyl-meso-2,6-diaminopimeloyl-D-alanyl-D-alanine + UDP-N-acetyl-alpha-D-glucosamine = di-trans,octa-cis-undecaprenyl diphospho-[N-acetyl-alpha-D-glucosaminyl-(1-&gt;4)]-N-acetyl-alpha-D-muramoyl-L-alanyl-D-glutamyl-meso-2,6-diaminopimeloyl-D-alanyl-D-alanine + UDP + H(+). It participates in cell wall biogenesis; peptidoglycan biosynthesis. In terms of biological role, cell wall formation. Catalyzes the transfer of a GlcNAc subunit on undecaprenyl-pyrophosphoryl-MurNAc-pentapeptide (lipid intermediate I) to form undecaprenyl-pyrophosphoryl-MurNAc-(pentapeptide)GlcNAc (lipid intermediate II). The polypeptide is UDP-N-acetylglucosamine--N-acetylmuramyl-(pentapeptide) pyrophosphoryl-undecaprenol N-acetylglucosamine transferase (Exiguobacterium sp. (strain ATCC BAA-1283 / AT1b)).